Here is a 214-residue protein sequence, read N- to C-terminus: Pyridoxine/pyridoxamine 5'-phosphate oxidase (214 aa).

Substrate is bound by residues 8–11 and Lys-66; that span reads RINY. FMN-binding positions include 61-66, 76-77, Arg-82, Lys-83, and Gln-105; these read RIVLIK and FT. Residues Tyr-123, Arg-127, and Ser-131 each contribute to the substrate site. Residues 140 to 141 and Trp-184 contribute to the FMN site; that span reads QS. A substrate-binding site is contributed by 190-192; sequence RLH. Arg-194 contacts FMN.

It belongs to the pyridoxamine 5'-phosphate oxidase family. In terms of assembly, homodimer. FMN serves as cofactor.

It carries out the reaction pyridoxamine 5'-phosphate + O2 + H2O = pyridoxal 5'-phosphate + H2O2 + NH4(+). It catalyses the reaction pyridoxine 5'-phosphate + O2 = pyridoxal 5'-phosphate + H2O2. It participates in cofactor metabolism; pyridoxal 5'-phosphate salvage; pyridoxal 5'-phosphate from pyridoxamine 5'-phosphate: step 1/1. Its pathway is cofactor metabolism; pyridoxal 5'-phosphate salvage; pyridoxal 5'-phosphate from pyridoxine 5'-phosphate: step 1/1. Catalyzes the oxidation of either pyridoxine 5'-phosphate (PNP) or pyridoxamine 5'-phosphate (PMP) into pyridoxal 5'-phosphate (PLP). In Burkholderia orbicola (strain MC0-3), this protein is Pyridoxine/pyridoxamine 5'-phosphate oxidase.